Reading from the N-terminus, the 273-residue chain is Probable ribosomal RNA small subunit methyltransferase A (273 aa).

S-adenosyl-L-methionine contacts are provided by N23, L25, G50, E71, D95, and N110.

It belongs to the class I-like SAM-binding methyltransferase superfamily. rRNA adenine N(6)-methyltransferase family. RsmA subfamily.

The protein resides in the cytoplasm. Functionally, specifically dimethylates two adjacent adenosines in the loop of a conserved hairpin near the 3'-end of 16S rRNA in the 30S particle. May play a critical role in biogenesis of 30S subunits. In Pyrococcus furiosus (strain ATCC 43587 / DSM 3638 / JCM 8422 / Vc1), this protein is Probable ribosomal RNA small subunit methyltransferase A.